A 574-amino-acid polypeptide reads, in one-letter code: Bifunctional NAD(P)H-hydrate repair enzyme Nnr (574 aa).

Residues 1 to 269 form an NAD(P)H-hydrate epimerase region; that stretch reads MKPVFSVDQI…SLFERANLKA (269 aa). In terms of domain architecture, YjeF N-terminal spans 10-231; it reads IRRAENTLFE…DINIAGGGGK (222 aa). The tract at residues 64 to 68 is NADPHX 1; for epimerase activity; that stretch reads GNGGD. Asparagine 65 and aspartate 123 together coordinate K(+). Residues 127–133 are NADPHX 1; for epimerase activity; sequence GIGGRGG. Aspartate 156 contacts (6S)-NADPHX. Position 159 (serine 159) interacts with K(+). The YjeF C-terminal domain maps to 277-568; sequence IGQHFTVLNM…DAIPAATAKV (292 aa). The interval 277–574 is ADP-dependent (S)-NAD(P)H-hydrate dehydratase; that stretch reads IGQHFTVLNM…TAKVDLKRIV (298 aa). Residue glycine 365 participates in (6S)-NADPHX binding. The segment at 418-424 is NADPHX 2; for dehydratase activity; it reads HKGEFER. ADP-binding positions include 461-465 and 480-489; these read KGKYT and HSWLATPGSG. Aspartate 490 lines the (6S)-NADPHX pocket.

The protein in the N-terminal section; belongs to the NnrE/AIBP family. This sequence in the C-terminal section; belongs to the NnrD/CARKD family. K(+) is required as a cofactor.

It carries out the reaction (6S)-NADHX + ADP = AMP + phosphate + NADH + H(+). The catalysed reaction is (6S)-NADPHX + ADP = AMP + phosphate + NADPH + H(+). The enzyme catalyses (6R)-NADHX = (6S)-NADHX. It catalyses the reaction (6R)-NADPHX = (6S)-NADPHX. Functionally, bifunctional enzyme that catalyzes the epimerization of the S- and R-forms of NAD(P)HX and the dehydration of the S-form of NAD(P)HX at the expense of ADP, which is converted to AMP. This allows the repair of both epimers of NAD(P)HX, a damaged form of NAD(P)H that is a result of enzymatic or heat-dependent hydration. This is Bifunctional NAD(P)H-hydrate repair enzyme Nnr (nnr) from Corynebacterium glutamicum (strain ATCC 13032 / DSM 20300 / JCM 1318 / BCRC 11384 / CCUG 27702 / LMG 3730 / NBRC 12168 / NCIMB 10025 / NRRL B-2784 / 534).